We begin with the raw amino-acid sequence, 91 residues long: Histone H1, sperm (91 aa).

The interval 1 to 25 is disordered; sequence PGSPQKRAASPRKSPRKGSPKKSPM. The segment covering 9–20 has biased composition (basic residues); the sequence is ASPRKSPRKGSP. Positions 18–91 constitute an H15 domain; sequence GSPKKSPMIR…TGATGRFRVG (74 aa).

It belongs to the histone H1/H5 family.

It is found in the nucleus. Its subcellular location is the chromosome. Its function is as follows. Histones H1 are necessary for the condensation of nucleosome chains into higher-order structures. The protein is Histone H1, sperm of Sphaerechinus granularis (Purple sea urchin).